Consider the following 219-residue polypeptide: Endonuclease III (219 aa).

The HhH domain occupies 117 to 136; that stretch reads MEELLTLPGVARKTANVVLA. 4 residues coordinate [4Fe-4S] cluster: Cys-197, Cys-204, Cys-207, and Cys-213.

This sequence belongs to the Nth/MutY family. [4Fe-4S] cluster is required as a cofactor.

It catalyses the reaction 2'-deoxyribonucleotide-(2'-deoxyribose 5'-phosphate)-2'-deoxyribonucleotide-DNA = a 3'-end 2'-deoxyribonucleotide-(2,3-dehydro-2,3-deoxyribose 5'-phosphate)-DNA + a 5'-end 5'-phospho-2'-deoxyribonucleoside-DNA + H(+). Functionally, DNA repair enzyme that has both DNA N-glycosylase activity and AP-lyase activity. The DNA N-glycosylase activity releases various damaged pyrimidines from DNA by cleaving the N-glycosidic bond, leaving an AP (apurinic/apyrimidinic) site. The AP-lyase activity cleaves the phosphodiester bond 3' to the AP site by a beta-elimination, leaving a 3'-terminal unsaturated sugar and a product with a terminal 5'-phosphate. This is Endonuclease III from Synechocystis sp. (strain ATCC 27184 / PCC 6803 / Kazusa).